The primary structure comprises 91 residues: Non-hemolytic enterotoxin 105 kDa component (91 aa).

Requires Zn(2+) as cofactor.

Its subcellular location is the secreted. In terms of biological role, this protein is a metalloprotease with gelatinolytic and collagenolytic activity and is a component of the non-hemolytic enterotoxin complex (NHE). The sequence is that of Non-hemolytic enterotoxin 105 kDa component from Bacillus cereus.